The primary structure comprises 487 residues: UDP-N-acetylmuramate--L-alanine ligase (487 aa).

Residue 124–130 (GTHGKTT) participates in ATP binding.

The protein belongs to the MurCDEF family.

Its subcellular location is the cytoplasm. It catalyses the reaction UDP-N-acetyl-alpha-D-muramate + L-alanine + ATP = UDP-N-acetyl-alpha-D-muramoyl-L-alanine + ADP + phosphate + H(+). The protein operates within cell wall biogenesis; peptidoglycan biosynthesis. In terms of biological role, cell wall formation. This Acaryochloris marina (strain MBIC 11017) protein is UDP-N-acetylmuramate--L-alanine ligase.